The following is a 638-amino-acid chain: MDGSGPFSCPICLEPLREPVTLPCGHNFCLACLGALWPHRGASGAGGPGGAARCPLCQEPFPDGLQLRKNHTLSELLQLRQGSGPGSGPGPAPALAPEPSAPSALPSVPEPSAPCAPEPWPAGEEPVRCDACPEGAALPAALSCLSCLASFCPAHLGPHERSPALRGHRLVPPLRRLEESLCPRHLRPLERYCRAERVCLCEACAAQEHRGHELVPLEQERALQEAEQSKVLSAVEDRMDELGAGIAQSRRTVALIKSAAVAERERVSRLFADAAAALQGFQTQVLGFIEEGEAAMLGRSQGDLRRQEEQRSRLSRARQNLSQVPEADSVSFLQELLALRLALEDGCGPGPGPPRELSFTKSSQAVRAVRDMLAVACVNQWEQLRGPGGNEDGPQKLDSEADAEPQDLESTNLLESEAPRDYFLKFAYIVDLDSDTADKFLQLFGTKGVKRVLCPINYPLSPTRFTHCEQVLGEGALDRGTYYWEVEIIEGWVSMGVMAEDFSPQEPYDRGRLGRNAHSCCLQWNGRSFSVWFHGLEAPLPHPFSPTVGVCLEYADRALAFYAVRDGKMSLLRRLKASRPRRGGIPASPIDPFQSRLDSHFAGLFTHRLKPAFFLESVDAHLQIGPLKKSCISVLKRR.

Residue Met1 is modified to N-acetylmethionine. Residues 9-58 (CPICLEPLREPVTLPCGHNFCLACLGALWPHRGASGAGGPGGAARCPLCQ) form an RING-type zinc finger. Thr72 is subject to Phosphothreonine. Positions 79-119 (LRQGSGPGSGPGPAPALAPEPSAPSALPSVPEPSAPCAPEP) are disordered. Composition is skewed to pro residues over residues 88–100 (GPGP…PEPS) and 108–119 (VPEPSAPCAPEP). The B box-type zinc-finger motif lies at 177–217 (LEESLCPRHLRPLERYCRAERVCLCEACAAQEHRGHELVPL). The Zn(2+) site is built by Cys182, His185, Cys204, and His209. Positions 296-324 (MLGRSQGDLRRQEEQRSRLSRARQNLSQV) form a coiled coil. Disordered regions lie at residues 300–322 (SQGD…QNLS) and 384–411 (LRGP…LEST). Residues 302–312 (GDLRRQEEQRS) are compositionally biased toward basic and acidic residues. Residues 410-631 (STNLLESEAP…LQIGPLKKSC (222 aa)) enclose the B30.2/SPRY domain. Phosphoserine is present on Ser461. Residue Arg582 is modified to Omega-N-methylarginine. Position 588 is a phosphoserine (Ser588).

This sequence belongs to the TRIM/RBCC family. In terms of tissue distribution, low expression in most tissues. Higher expression in kidney tubular cells. Overexpressed in astrocytoma tumor cells.

Its subcellular location is the cytoplasm. The protein localises to the nucleus. It carries out the reaction S-ubiquitinyl-[E2 ubiquitin-conjugating enzyme]-L-cysteine + [acceptor protein]-L-lysine = [E2 ubiquitin-conjugating enzyme]-L-cysteine + N(6)-ubiquitinyl-[acceptor protein]-L-lysine.. It functions in the pathway protein modification; protein ubiquitination. Its function is as follows. E3 ubiquitin-protein ligase that mediates the ubiquitination and proteasomal degradation of CYLD. The chain is E3 ubiquitin-protein ligase TRIM47 from Homo sapiens (Human).